The following is a 246-amino-acid chain: Caffeoyl-CoA O-methyltransferase 1 (246 aa).

Position 21 (K21) interacts with substrate. Residues T63, E85, 87–88, S93, D111, and A140 each bind S-adenosyl-L-methionine; that span reads GV. A substrate-binding site is contributed by D162. A divalent metal cation is bound at residue D162. D164 contributes to the S-adenosyl-L-methionine binding site. A divalent metal cation-binding residues include D188 and N189. N193 contributes to the substrate binding site.

Belongs to the class I-like SAM-binding methyltransferase superfamily. Cation-dependent O-methyltransferase family. CCoAMT subfamily. It depends on a divalent metal cation as a cofactor.

The enzyme catalyses (E)-caffeoyl-CoA + S-adenosyl-L-methionine = (E)-feruloyl-CoA + S-adenosyl-L-homocysteine + H(+). Its pathway is aromatic compound metabolism; phenylpropanoid biosynthesis. Methylates caffeoyl-CoA to feruloyl-CoA and 5-hydroxyferuloyl-CoA to sinapoyl-CoA. Plays a role in the synthesis of feruloylated polysaccharides. Involved in the reinforcement of the plant cell wall. Also involved in the responding to wounding or pathogen challenge by the increased formation of cell wall-bound ferulic acid polymers. The sequence is that of Caffeoyl-CoA O-methyltransferase 1 (CCOMT) from Eucalyptus globulus (Tasmanian blue gum).